The chain runs to 160 residues: Phosphopantetheine adenylyltransferase (160 aa).

S9 contacts substrate. ATP is bound by residues 9–10 and H17; that span reads SF. Positions 41, 73, and 87 each coordinate substrate. ATP-binding positions include 88 to 90, E98, and 122 to 128; these read GLR and YSFVSSS.

The protein belongs to the bacterial CoaD family. In terms of assembly, homohexamer. Mg(2+) serves as cofactor.

Its subcellular location is the cytoplasm. It catalyses the reaction (R)-4'-phosphopantetheine + ATP + H(+) = 3'-dephospho-CoA + diphosphate. The protein operates within cofactor biosynthesis; coenzyme A biosynthesis; CoA from (R)-pantothenate: step 4/5. Its function is as follows. Reversibly transfers an adenylyl group from ATP to 4'-phosphopantetheine, yielding dephospho-CoA (dPCoA) and pyrophosphate. This Mycolicibacterium vanbaalenii (strain DSM 7251 / JCM 13017 / BCRC 16820 / KCTC 9966 / NRRL B-24157 / PYR-1) (Mycobacterium vanbaalenii) protein is Phosphopantetheine adenylyltransferase.